The primary structure comprises 91 residues: Non-specific lipid-transfer protein 1 (91 aa).

Intrachain disulfides connect Cys-4–Cys-51, Cys-14–Cys-28, Cys-29–Cys-74, and Cys-49–Cys-88.

Detected in seeds (at protein level).

Its function is as follows. Plant non-specific lipid-transfer proteins transfer phospholipids as well as galactolipids across membranes. May play a role in wax or cutin deposition in the cell walls of expanding epidermal cells and certain secretory tissues. The chain is Non-specific lipid-transfer protein 1 from Trachyspermum ammi (Ajowan caraway).